Here is a 492-residue protein sequence, read N- to C-terminus: uncharacterized protein (492 aa).

An N-terminal signal peptide occupies residues 1–22 (MIRPNMFALLMLVVLAITSVNA). Residues N92, N97, N119, N146, N213, N267, and N458 are each glycosylated (N-linked (GlcNAc...) asparagine; by host).

It is found in the secreted. This is an uncharacterized protein from Acanthamoeba polyphaga (Amoeba).